A 150-amino-acid polypeptide reads, in one-letter code: uncharacterized protein (150 aa).

Residues 49-88 (KEWAENASTDEIDDFLTHDDETERDADPSSGSGPELMNKA) are disordered. Residues 63 to 75 (FLTHDDETERDAD) show a composition bias toward basic and acidic residues.

This is an uncharacterized protein from Bacillus subtilis (strain 168).